Here is a 79-residue protein sequence, read N- to C-terminus: Large ribosomal subunit protein bL28 (79 aa).

The interval 1 to 26 is disordered; that stretch reads MAKVCQVTGKRPQSGNNVSHANKKTN. A compositionally biased stretch (polar residues) spans 11–20; it reads RPQSGNNVSH.

Belongs to the bacterial ribosomal protein bL28 family.

The sequence is that of Large ribosomal subunit protein bL28 from Coxiella burnetii (strain CbuK_Q154) (Coxiella burnetii (strain Q154)).